A 572-amino-acid polypeptide reads, in one-letter code: Proline--tRNA ligase (572 aa).

It belongs to the class-II aminoacyl-tRNA synthetase family. ProS type 1 subfamily. Homodimer.

The protein resides in the cytoplasm. The catalysed reaction is tRNA(Pro) + L-proline + ATP = L-prolyl-tRNA(Pro) + AMP + diphosphate. Functionally, catalyzes the attachment of proline to tRNA(Pro) in a two-step reaction: proline is first activated by ATP to form Pro-AMP and then transferred to the acceptor end of tRNA(Pro). As ProRS can inadvertently accommodate and process non-cognate amino acids such as alanine and cysteine, to avoid such errors it has two additional distinct editing activities against alanine. One activity is designated as 'pretransfer' editing and involves the tRNA(Pro)-independent hydrolysis of activated Ala-AMP. The other activity is designated 'posttransfer' editing and involves deacylation of mischarged Ala-tRNA(Pro). The misacylated Cys-tRNA(Pro) is not edited by ProRS. This is Proline--tRNA ligase from Escherichia coli (strain K12 / MC4100 / BW2952).